The sequence spans 257 residues: Glycerol-3-phosphate acyltransferase (257 aa).

6 helical membrane passes run 7 to 27 (IVMAYILTLIISPLYSYLIGS), 66 to 86 (ILTLFLDIIKPITTVSLTYII), 104 to 124 (AILVYFGGIFTIIGHCYPIFF), 140 to 160 (ITVDPIVALIGIITLLVILLI), 164 to 184 (MSLSAMITATFTCFLVLVPGI), and 203 to 223 (YVIKGIWYVWFFLLVSASLLI).

Belongs to the PlsY family. As to quaternary structure, probably interacts with PlsX.

It is found in the cell membrane. It catalyses the reaction an acyl phosphate + sn-glycerol 3-phosphate = a 1-acyl-sn-glycero-3-phosphate + phosphate. It functions in the pathway lipid metabolism; phospholipid metabolism. In terms of biological role, catalyzes the transfer of an acyl group from acyl-phosphate (acyl-PO(4)) to glycerol-3-phosphate (G3P) to form lysophosphatidic acid (LPA). This enzyme utilizes acyl-phosphate as fatty acyl donor, but not acyl-CoA or acyl-ACP. The polypeptide is Glycerol-3-phosphate acyltransferase (Ureaplasma parvum serovar 3 (strain ATCC 700970)).